We begin with the raw amino-acid sequence, 256 residues long: DNA repair protein RecO (256 aa).

This sequence belongs to the RecO family.

Its function is as follows. Involved in DNA repair and RecF pathway recombination. The polypeptide is DNA repair protein RecO (Pelotomaculum thermopropionicum (strain DSM 13744 / JCM 10971 / SI)).